Reading from the N-terminus, the 88-residue chain is ATP synthase F(0) complex subunit f, mitochondrial (88 aa).

Ala-2 bears the N-acetylalanine mark. Position 3 is a phosphoserine (Ser-3). N6-acetyllysine is present on Lys-16. A helical transmembrane segment spans residues 62–79 (MVLAAYVVFNYCRSYKEL).

This sequence belongs to the ATPase F chain family. In terms of assembly, component of the ATP synthase complex composed at least of ATP5F1A/subunit alpha, ATP5F1B/subunit beta, ATP5MC1/subunit c (homooctomer), MT-ATP6/subunit a, MT-ATP8/subunit 8, ATP5ME/subunit e, ATP5MF/subunit f, ATP5MG/subunit g, ATP5MK/subunit k, ATP5MJ/subunit j, ATP5F1C/subunit gamma, ATP5F1D/subunit delta, ATP5F1E/subunit epsilon, ATP5PF/subunit F6, ATP5PB/subunit b, ATP5PD/subunit d, ATP5PO/subunit OSCP. ATP synthase complex consists of a soluble F(1) head domain (subunits alpha(3) and beta(3)) - the catalytic core - and a membrane F(0) domain - the membrane proton channel (subunits c, a, 8, e, f, g, k and j). These two domains are linked by a central stalk (subunits gamma, delta, and epsilon) rotating inside the F1 region and a stationary peripheral stalk (subunits F6, b, d, and OSCP).

The protein resides in the mitochondrion. Its subcellular location is the mitochondrion inner membrane. Its function is as follows. Subunit f, of the mitochondrial membrane ATP synthase complex (F(1)F(0) ATP synthase or Complex V) that produces ATP from ADP in the presence of a proton gradient across the membrane which is generated by electron transport complexes of the respiratory chain. ATP synthase complex consist of a soluble F(1) head domain - the catalytic core - and a membrane F(1) domain - the membrane proton channel. These two domains are linked by a central stalk rotating inside the F(1) region and a stationary peripheral stalk. During catalysis, ATP synthesis in the catalytic domain of F(1) is coupled via a rotary mechanism of the central stalk subunits to proton translocation. In vivo, can only synthesize ATP although its ATP hydrolase activity can be activated artificially in vitro. Part of the complex F(0) domain. This chain is ATP synthase F(0) complex subunit f, mitochondrial, found in Sus scrofa (Pig).